We begin with the raw amino-acid sequence, 295 residues long: Aspartate carbamoyltransferase catalytic subunit (295 aa).

Positions 49 and 50 each coordinate carbamoyl phosphate. Residue K77 participates in L-aspartate binding. Carbamoyl phosphate is bound by residues R99, H127, and Q130. L-aspartate is bound by residues R161 and R212. Residues G251 and P252 each coordinate carbamoyl phosphate.

It belongs to the aspartate/ornithine carbamoyltransferase superfamily. ATCase family. As to quaternary structure, heterododecamer (2C3:3R2) of six catalytic PyrB chains organized as two trimers (C3), and six regulatory PyrI chains organized as three dimers (R2).

The enzyme catalyses carbamoyl phosphate + L-aspartate = N-carbamoyl-L-aspartate + phosphate + H(+). Its pathway is pyrimidine metabolism; UMP biosynthesis via de novo pathway; (S)-dihydroorotate from bicarbonate: step 2/3. In terms of biological role, catalyzes the condensation of carbamoyl phosphate and aspartate to form carbamoyl aspartate and inorganic phosphate, the committed step in the de novo pyrimidine nucleotide biosynthesis pathway. This Campylobacter jejuni (strain RM1221) protein is Aspartate carbamoyltransferase catalytic subunit.